The chain runs to 479 residues: Odorant receptor coreceptor (479 aa).

Residues 1–43 are Cytoplasmic-facing; that stretch reads MHVQPTKYHGLVLDLMPNIRLMQGFGHFLFRYVSGPVLIRKLY. A helical transmembrane segment spans residues 44–64; it reads SWWNLIMILLQYFAIMGNLVM. Residues 65–73 are Extracellular-facing; the sequence is NTGDVNELT. Residues 74-94 form a helical membrane-spanning segment; that stretch reads ANTITTLFFTHSVTKFIYVAV. The Cytoplasmic segment spans residues 95-133; it reads NSEHFYRTLGIWNQPNSHSLFAESDARYHSIALAKMRKL. A helical transmembrane segment spans residues 134–154; that stretch reads LVMVMVTTVLSVVAWITITFF. At 155 to 187 the chain is on the extracellular side; sequence GDSVKNVFDKETNETYTVEIPRLPIKALYPWDA. Residue asparagine 167 is glycosylated (N-linked (GlcNAc...) asparagine). The chain crosses the membrane as a helical span at residues 188–208; it reads MSGVPYFFSFVYQAYFLLFSM. Over 209-344 the chain is Cytoplasmic; sequence CQANLADVMF…VERHKHVVRL (136 aa). Residues 345-365 form a helical membrane-spanning segment; the sequence is VSAIGETYGAALLLHMLTSTI. Topologically, residues 366–383 are extracellular; that stretch reads KLTLLAYQATKIDALNVY. Residues 384–404 traverse the membrane as a helical segment; sequence GLTVIGYLVYALAQVFLFCIF. Over 405–455 the chain is Cytoplasmic; the sequence is GNRLIEESSSVMEAAYSCHWYDGSEEAKTFVQIVCQQCQKAMTISGAKFFT. Residues 456–476 form a helical membrane-spanning segment; the sequence is VSLDLFASVLGAVVTYFMVLV. Residues 477–479 are Extracellular-facing; the sequence is QLK.

The protein belongs to the insect chemoreceptor superfamily. Heteromeric odorant receptor channel (TC 1.A.69) family. Orco subfamily. Heterodimer with conventional odorant receptors (ORs). In terms of tissue distribution, expressed in female antenna, maxillary palp and proboscis. Not detected in male tissues.

Its subcellular location is the cell membrane. Odorant coreceptor which complexes with conventional odorant receptors (ORs) to form odorant-sensing units, providing sensitive and prolonged odorant signaling and calcium permeability. Orco is a universal and integral part of the functional odorant receptor, involved in the dendritic localization of other olfactory receptors. Required for detecting a host for blood feeding. Plays a key role in preferred attraction of females for humans over non-human hosts for blood feeding. This is Odorant receptor coreceptor from Aedes albopictus (Asian tiger mosquito).